Here is a 255-residue protein sequence, read N- to C-terminus: MLKFVVLLCAISCALGAAVPEGMVPQLDGRIVGGVATTISSFPWQISLQRSGSHSCGGSVYNSRIIVTAAHCLQSVSTSVLKVRRGSSYWNSGGVVVSVAAFKNHEGYNPKTMVNDIAVIRLSSSLTMSSTIKAIALTTAAPANGAAATVSGWGTTSSGGSIPAQLRYVDLKIVGRTQCASSTYGYGSQIKPSMICAYTVGKDSCQGDSGGPLVSGGRLVGVVSWGYGCAFANYPGVYADVAALRTWVVSAASSV.

Positions 1–16 (MLKFVVLLCAISCALG) are cleaved as a signal peptide. Residues 17–30 (AAVPEGMVPQLDGR) constitute a propeptide, activation peptide. Residues 31-253 (IVGGVATTIS…LRTWVVSAAS (223 aa)) form the Peptidase S1 domain. Residues Cys56 and Cys72 are joined by a disulfide bond. Residues His71 and Asp116 each act as charge relay system in the active site. Intrachain disulfides connect Cys179–Cys196 and Cys205–Cys229. The active-site Charge relay system is the Ser209.

It belongs to the peptidase S1 family.

It is found in the secreted. Its subcellular location is the extracellular space. It catalyses the reaction Preferential cleavage: Arg-|-Xaa, Lys-|-Xaa.. The protein is Trypsin alpha-4 of Lucilia cuprina (Green bottle fly).